The primary structure comprises 410 residues: Serine hydroxymethyltransferase (410 aa).

Residues Leu116 and 120-122 (GHL) contribute to the (6S)-5,6,7,8-tetrahydrofolate site. Lys225 carries the N6-(pyridoxal phosphate)lysine modification. 349–351 (SPF) lines the (6S)-5,6,7,8-tetrahydrofolate pocket.

Belongs to the SHMT family. Homodimer. Requires pyridoxal 5'-phosphate as cofactor.

It localises to the cytoplasm. It carries out the reaction (6R)-5,10-methylene-5,6,7,8-tetrahydrofolate + glycine + H2O = (6S)-5,6,7,8-tetrahydrofolate + L-serine. Its pathway is one-carbon metabolism; tetrahydrofolate interconversion. It participates in amino-acid biosynthesis; glycine biosynthesis; glycine from L-serine: step 1/1. Catalyzes the reversible interconversion of serine and glycine with tetrahydrofolate (THF) serving as the one-carbon carrier. This reaction serves as the major source of one-carbon groups required for the biosynthesis of purines, thymidylate, methionine, and other important biomolecules. Also exhibits THF-independent aldolase activity toward beta-hydroxyamino acids, producing glycine and aldehydes, via a retro-aldol mechanism. This chain is Serine hydroxymethyltransferase, found in Leuconostoc citreum (strain KM20).